Consider the following 229-residue polypeptide: Non-structural protein P8 (229 aa).

The next 2 membrane-spanning stretches (helical) occupy residues 119 to 139 and 162 to 182; these read IIHMTLLIAAVVALLTSVCTL and SLNPMLGVVNLGATFLMMVCA.

The protein belongs to the orbivirus NS3 family. In terms of assembly, forms homooligomers via coiled-coil motif. Interacts with host OPTN; this interaction inhibits innate immune response.

Its subcellular location is the host cell membrane. The protein localises to the host Golgi apparatus. In terms of biological role, plays a role in the inhibition of host innate immune response. Interacts with host OPTN and thus inhibits the recruitment of TBK1 to the host Golgi apparatus. In turn, downstream partner IRF3 cannot be activated and IFN-beta production is impaired. Its function is as follows. Facilitates viral particle release either by increasing plasma membrane permeability through a viroporin-like activity or by viral budding. The protein is Non-structural protein P8 (Segment-10) of Bluetongue virus 17 (isolate USA) (BTV 17).